The chain runs to 415 residues: Corticotropin-releasing factor receptor 1 (415 aa).

The signal sequence occupies residues 1 to 23 (MARHPQLRLVKALLLLGLNPVSA). Over 24–111 (SLQDQHCESL…CQEILNEEKK (88 aa)) the chain is Extracellular. Cystine bridges form between cysteine 30-cysteine 54, cysteine 44-cysteine 87, and cysteine 68-cysteine 102. Residues asparagine 38, asparagine 78, and asparagine 98 are each glycosylated (N-linked (GlcNAc...) asparagine). The important for peptide agonist binding stretch occupies residues 99-108 (YSECQEILNE). A helical membrane pass occupies residues 112–142 (SKVHYHVAVIINYLGHCISLVALLVAFVLFL). The Cytoplasmic portion of the chain corresponds to 143 to 149 (RLRSIRC). The helical transmembrane segment at 150–174 (LRNIIHWNLISAFILRNATWFVVQL) threads the bilayer. Residues 175–189 (TMSPEVHQSNVGWCR) lie on the Extracellular side of the membrane. Cysteine 188 and cysteine 258 form a disulfide bridge. A helical transmembrane segment spans residues 190–218 (LVTAAYNYFHVTNFFWMFGEGCYLHTAIV). At 219-225 (LTYSTDR) the chain is on the cytoplasmic side. Residues 226–253 (LRKWMFICIGWGVPFPIIVAWAIGKLYY) form a helical membrane-spanning segment. Over 254 to 269 (DNEKCWFGKRPGVYTD) the chain is Extracellular. The chain crosses the membrane as a helical span at residues 270 to 295 (YIYQGPMILVLLINFIFLFNIVRILM). Residues 280–290 (LLINFIFLFNI) are important for antagonist binding. Topologically, residues 296–306 (TKLRASTTSET) are cytoplasmic. Serine 301 carries the post-translational modification Phosphoserine; by PKA. The helical transmembrane segment at 307 to 331 (IQYRKAVKATLVLLPLLGITYMLFF) threads the bilayer. Over 332 to 338 (VNPGEDE) the chain is Extracellular. A helical transmembrane segment spans residues 339–368 (VSRVVFIYFNSFLESFQGFFVSVFYCFLNS). Over 369–415 (EVRSAIRKRWHRWQDKHSIRARVARAMSIPTSPTRVSFHSIKQSTAV) the chain is Cytoplasmic.

It belongs to the G-protein coupled receptor 2 family. As to quaternary structure, heterodimer; heterodimerizes with GPER1. Interacts (via N-terminal extracellular domain) with CRH and UCN. Interacts with DLG1; this inhibits endocytosis of CRHR1 after agonist binding. Post-translationally, C-terminal Ser or Thr residues may be phosphorylated. Phosphorylation at Ser-301 by PKA prevents maximal coupling to Gq-protein, and thereby negatively regulates downstream signaling. Expressed abundantly in the pituitary, cerebral cortex, hippocampus, amygdala and cerebellum.

Its subcellular location is the cell membrane. The protein resides in the endosome. Functionally, G-protein coupled receptor for CRH (corticotropin-releasing factor) and UCN (urocortin). Has high affinity for CRH and UCN. Ligand binding causes a conformation change that triggers signaling via guanine nucleotide-binding proteins (G proteins) and down-stream effectors, such as adenylate cyclase. Promotes the activation of adenylate cyclase, leading to increased intracellular cAMP levels. Inhibits the activity of the calcium channel CACNA1H. Required for normal embryonic development of the adrenal gland and for normal hormonal responses to stress. Plays a role in the response to anxiogenic stimuli. This chain is Corticotropin-releasing factor receptor 1 (CRHR1), found in Macaca mulatta (Rhesus macaque).